A 164-amino-acid polypeptide reads, in one-letter code: Urocortin-3 (164 aa).

Residues 1–23 (MLMPTYFLLPLLLLLGGPRTSLS) form the signal peptide. A propeptide spanning residues 24-121 (HKFYNTGPVF…PDKPKSDRGT (98 aa)) is cleaved from the precursor. A disordered region spans residues 58–120 (SFGHLPTQDP…YPDKPKSDRG (63 aa)). The span at 110-120 (LYPDKPKSDRG) shows a compositional bias: basic and acidic residues. Isoleucine amide is present on I160.

Belongs to the sauvagine/corticotropin-releasing factor/urotensin I family. Binds with high affinity to CRF receptors 2-alpha and 2-beta. As to expression, expressed in some areas of the brain including the hypothalamus, amygdala, and brainstem, but is not evident in the cerebellum, pituitary, or cerebral cortex; it is also expressed peripherally in small intestine and skin.

It localises to the secreted. In terms of biological role, suppresses food intake, delays gastric emptying and decreases heat-induced edema. Might represent an endogenous ligand for maintaining homeostasis after stress. This chain is Urocortin-3 (Ucn3), found in Mus musculus (Mouse).